A 158-amino-acid polypeptide reads, in one-letter code: Large ribosomal subunit protein uL15 (158 aa).

Disordered stretches follow at residues 1-53 and 138-158; these read MRIH…FEGG and ESAG…SNNE. Residues 23 to 35 show a composition bias toward gly residues; it reads ISAGQGASGGFGM. Residues 145-158 are compositionally biased toward polar residues; it reads QDLSDTSNAPSNNE.

It belongs to the universal ribosomal protein uL15 family. Part of the 50S ribosomal subunit.

In terms of biological role, binds to the 23S rRNA. The polypeptide is Large ribosomal subunit protein uL15 (Crocosphaera subtropica (strain ATCC 51142 / BH68) (Cyanothece sp. (strain ATCC 51142))).